Consider the following 237-residue polypeptide: MOB kinase activator 2 (237 aa).

Residues 1–21 (MDWLMGKSKAKPNGKKPAAEE) form a disordered region. Residues Cys78, Cys83, His157, and His162 each coordinate Zn(2+). Positions 217 to 229 (GGSGDGAGSGGPG) are enriched in gly residues. The interval 217–237 (GGSGDGAGSGGPGAQNHVKER) is disordered.

Belongs to the MOB1/phocein family. As to quaternary structure, binds STK38 and STK38L. In terms of processing, phosphorylated.

Its subcellular location is the nucleus. The protein localises to the cytoplasm. The protein resides in the perinuclear region. In terms of biological role, stimulates the autophosphorylation and kinase activity of STK38 and STK38L. This Homo sapiens (Human) protein is MOB kinase activator 2 (MOB2).